The primary structure comprises 219 residues: Glutathione S-transferase F13 (219 aa).

Positions 2–82 constitute a GST N-terminal domain; sequence AMKLYGDEMS…YIAEKHRDKG (81 aa). Residues 11 to 12, 40 to 41, 53 to 54, and 66 to 67 contribute to the glutathione site; these read SA, HK, KV, and ES. Positions 90–217 constitute a GST C-terminal domain; sequence DPKEAAIVKL…VSPGLTVAPT (128 aa).

Belongs to the GST superfamily. Phi family.

The protein localises to the cytoplasm. It localises to the cytosol. The enzyme catalyses RX + glutathione = an S-substituted glutathione + a halide anion + H(+). In terms of biological role, may be involved in the conjugation of reduced glutathione to a wide number of exogenous and endogenous hydrophobic electrophiles and have a detoxification role against certain herbicides. The protein is Glutathione S-transferase F13 (GSTF13) of Arabidopsis thaliana (Mouse-ear cress).